The primary structure comprises 227 residues: Charged multivesicular body protein 4b (227 aa).

Disordered stretches follow at residues 1–26 (MSGILGKLFGAGAGGKGAGKGPSPQE) and 186–227 (SGPE…AGNM). The span at 9–20 (FGAGAGGKGAGK) shows a compositional bias: gly residues. Positions 25 to 185 (QEAIQRLRDT…EELDKNLLEI (161 aa)) form a coiled coil.

It belongs to the SNF7 family. In terms of assembly, probable core component of the endosomal sorting required for transport complex III (ESCRT-III). ESCRT-III components are thought to multimerize to form a flat lattice on the perimeter membrane of the endosome.

It localises to the cytoplasm. The protein resides in the cytosol. The protein localises to the late endosome membrane. Its subcellular location is the midbody. Its function is as follows. Probable core component of the endosomal sorting required for transport complex III (ESCRT-III) which is involved in multivesicular bodies (MVBs) formation and sorting of endosomal cargo proteins into MVBs. MVBs contain intraluminal vesicles (ILVs) that are generated by invagination and scission from the limiting membrane of the endosome and mostly are delivered to lysosomes enabling degradation of membrane proteins, such as stimulated growth factor receptors, lysosomal enzymes and lipids. This chain is Charged multivesicular body protein 4b (CHMP4B), found in Gallus gallus (Chicken).